The primary structure comprises 177 residues: Adenine phosphoribosyltransferase (177 aa).

This sequence belongs to the purine/pyrimidine phosphoribosyltransferase family. Homodimer.

It is found in the cytoplasm. The catalysed reaction is AMP + diphosphate = 5-phospho-alpha-D-ribose 1-diphosphate + adenine. Its pathway is purine metabolism; AMP biosynthesis via salvage pathway; AMP from adenine: step 1/1. Functionally, catalyzes a salvage reaction resulting in the formation of AMP, that is energically less costly than de novo synthesis. The sequence is that of Adenine phosphoribosyltransferase from Chlorobium chlorochromatii (strain CaD3).